The chain runs to 2599 residues: Non-reducing polyketide synthase azaA (2599 aa).

The segment at Pro-95–Gln-231 is N-terminal acylcarrier protein transacylase domain (SAT). Cys-132 (nucleophile; for transacylase activity) is an active-site residue. His-250 functions as the Proton donor/acceptor; for transacylase activity in the catalytic mechanism. In terms of domain architecture, Ketosynthase family 3 (KS3) spans Pro-372–Gln-790. Catalysis depends on for beta-ketoacyl synthase activity residues Cys-539, His-674, and His-713. Positions Phe-902 to Gly-1193 are malonyl-CoA:ACP transacylase (MAT) domain. The tract at residues Pro-1282 to Asp-1413 is N-terminal hotdog fold. A PKS/mFAS DH domain is found at Pro-1282–Ser-1591. Residues Leu-1310–Ser-1589 are product template (PT) domain. Catalysis depends on His-1314, which acts as the Proton acceptor; for dehydratase activity. The segment at Ala-1443–Ser-1591 is C-terminal hotdog fold. The active-site Proton donor; for dehydratase activity is the Asp-1499. The tract at residues Glu-1601–Gln-1652 is disordered. Low complexity predominate over residues Ala-1602–Arg-1619. In terms of domain architecture, Carrier spans Gln-1653–Val-1727. Ser-1687 is modified (O-(pantetheine 4'-phosphoryl)serine). The tract at residues Asn-1749–Ser-1779 is disordered. A compositionally biased stretch (low complexity) spans Leu-1750–Asp-1766. Positions Leu-1769 to Ser-1779 are enriched in polar residues. The methyltransferase domain stretch occupies residues Asp-1952 to Asp-2140. The interval Ile-2222 to Ala-2467 is NADPH-binding (R) domain.

Pantetheine 4'-phosphate is required as a cofactor.

The protein operates within secondary metabolite biosynthesis. Non-reducing polyketide synthase; part of the gene cluster that mediates the biosynthesis of azaphilones, a class of fungal metabolites characterized by a highly oxygenated pyrano-quinone bicyclic core and exhibiting a broad range of bioactivities. In the first step, the non-reducing polyketide synthase azaA forms the hexaketide precursor from successive condensations of five malonyl-CoA units, presumably with a simple acetyl-CoA starter unit. The reactive polyketide chain then undergoes a PT-mediated C2-C7 cyclization to afford the aromatic ring and is eventually released as an aldehyde through the R-domain. The putative ketoreductase azaE is proposed to catalyze the reduction of the terminal ketone resulting in the early culture product FK17-P2a. The monooxygenase azaH was demonstrated to be the only enzyme required to convert FK17-P2a to azanigerone E. AzaH first hydroxylates the benzaldehyde intermediate FK17-P2a at C4, which triggers the formation of the pyran-ring to afford azanigerone E. In parallel, the 2,4-dimethylhexanoyl chain is synthesized by the HR-PKS azaB and is proposed to be transferred to the C4-hydroxyl of azanigerone E by the acyltransferase azaD directly from the ACP domain of azaB. Alternatively, the 2,4-dimethyl-hexanoyl chain may be offloaded from the HR-PKS as a carboxylic acid and converted to an acyl-CoA by azaF. The resulting acyl-CoA molecule could then be taken up as a substrate by AzaD to form azanigerone B. To yield the carboxylic acid substituent in azanigerone A, the hydroxypropyl side chain of azanigerone B would need to undergo a C-C oxidative cleavage catalyzed by cytochrome P450 AzaI. AzaI is proposed to act on a vicinal diol that leads to a C-C bond scission either through an alkoxyradical intermediate or a peroxy complex. In the biosynthesis of azanigerone A, azanigerone B first undergoes hydroxylation at C10, possibly catalyzed by one of the two FAD-dependent monooxygenases encoded in the cluster, azaG or azaL, resulting in the vicinal diol azanigerone C. Oxidative cleavage of azanigerone C by azaI would yield the corresponding aldehyde derivative of azanigerone A. Finally, the dehydrogenase azaJ is proposed to convert the aldehyde functional group into the carboxylic acid, completing the conversion from azanigerone B to azanigerone A. Alternatively, the oxidation of aldehyde to carboxylic acid may be catalyzed by the same P450 enzyme azaI via consecutive oxidation or by endogenous alcohol dehydrogenase. In Aspergillus niger (strain ATCC 1015 / CBS 113.46 / FGSC A1144 / LSHB Ac4 / NCTC 3858a / NRRL 328 / USDA 3528.7), this protein is Non-reducing polyketide synthase azaA.